We begin with the raw amino-acid sequence, 131 residues long: Small ribosomal subunit protein uS8 (131 aa).

Belongs to the universal ribosomal protein uS8 family. In terms of assembly, part of the 30S ribosomal subunit. Contacts proteins S5 and S12.

Functionally, one of the primary rRNA binding proteins, it binds directly to 16S rRNA central domain where it helps coordinate assembly of the platform of the 30S subunit. The polypeptide is Small ribosomal subunit protein uS8 (Wolbachia pipientis wMel).